Reading from the N-terminus, the 62-residue chain is MSFLKKSLLLVLFLGLVSFSICEEEKRETEEEENEDDMDEESEEKKRESPDRPPGFSPFRVD.

An N-terminal signal peptide occupies residues 1–22; that stretch reads MSFLKKSLLLVLFLGLVSFSIC. The propeptide occupies 23–51; it reads EEEKRETEEEENEDDMDEESEEKKRESPD. The tract at residues 24 to 62 is disordered; that stretch reads EEKRETEEEENEDDMDEESEEKKRESPDRPPGFSPFRVD. The segment covering 30–42 has biased composition (acidic residues); it reads EEEENEDDMDEES.

It belongs to the frog skin active peptide (FSAP) family. Bradykinin-related peptide subfamily. In terms of tissue distribution, expressed by the skin glands.

Its subcellular location is the secreted. In terms of biological role, induces relaxation of rat smooth muscle from tail artery and contraction of that from ileum, urinary bladder and uterus. Binds to both bradykinin receptor B1 (BDKRB1) and B2 (BDKRB2). In Agalychnis spurrelli (Gliding leaf frog), this protein is [Ser6, Val10, Asp11]-phyllokinin.